Consider the following 325-residue polypeptide: Elongation factor P--(R)-beta-lysine ligase (325 aa).

76 to 78 provides a ligand contact to substrate; that stretch reads SPE. Residues 100 to 102 and Asn109 contribute to the ATP site; that span reads RNE. Tyr118 provides a ligand contact to substrate. 244-245 lines the ATP pocket; the sequence is EL. Position 251 (Glu251) interacts with substrate. Gly300 contributes to the ATP binding site.

Belongs to the class-II aminoacyl-tRNA synthetase family. EpmA subfamily. Homodimer.

The catalysed reaction is D-beta-lysine + L-lysyl-[protein] + ATP = N(6)-((3R)-3,6-diaminohexanoyl)-L-lysyl-[protein] + AMP + diphosphate + H(+). With EpmB is involved in the beta-lysylation step of the post-translational modification of translation elongation factor P (EF-P). Catalyzes the ATP-dependent activation of (R)-beta-lysine produced by EpmB, forming a lysyl-adenylate, from which the beta-lysyl moiety is then transferred to the epsilon-amino group of a conserved specific lysine residue in EF-P. In Erwinia tasmaniensis (strain DSM 17950 / CFBP 7177 / CIP 109463 / NCPPB 4357 / Et1/99), this protein is Elongation factor P--(R)-beta-lysine ligase.